Here is a 390-residue protein sequence, read N- to C-terminus: Queuine tRNA-ribosyltransferase (390 aa).

Catalysis depends on D90, which acts as the Proton acceptor. Substrate is bound by residues 90–94 (DSGGF), D144, Q197, and G224. The segment at 255 to 261 (GVGTPED) is RNA binding. Residue D274 is the Nucleophile of the active site. Residues 279–283 (TRNAR) are RNA binding; important for wobble base 34 recognition. Residues C312, C314, C317, and H354 each coordinate Zn(2+).

It belongs to the queuine tRNA-ribosyltransferase family. In terms of assembly, homodimer. Within each dimer, one monomer is responsible for RNA recognition and catalysis, while the other monomer binds to the replacement base PreQ1. The cofactor is Zn(2+).

It carries out the reaction 7-aminomethyl-7-carbaguanine + guanosine(34) in tRNA = 7-aminomethyl-7-carbaguanosine(34) in tRNA + guanine. The protein operates within tRNA modification; tRNA-queuosine biosynthesis. Its function is as follows. Catalyzes the base-exchange of a guanine (G) residue with the queuine precursor 7-aminomethyl-7-deazaguanine (PreQ1) at position 34 (anticodon wobble position) in tRNAs with GU(N) anticodons (tRNA-Asp, -Asn, -His and -Tyr). Catalysis occurs through a double-displacement mechanism. The nucleophile active site attacks the C1' of nucleotide 34 to detach the guanine base from the RNA, forming a covalent enzyme-RNA intermediate. The proton acceptor active site deprotonates the incoming PreQ1, allowing a nucleophilic attack on the C1' of the ribose to form the product. After dissociation, two additional enzymatic reactions on the tRNA convert PreQ1 to queuine (Q), resulting in the hypermodified nucleoside queuosine (7-(((4,5-cis-dihydroxy-2-cyclopenten-1-yl)amino)methyl)-7-deazaguanosine). This Leptothrix cholodnii (strain ATCC 51168 / LMG 8142 / SP-6) (Leptothrix discophora (strain SP-6)) protein is Queuine tRNA-ribosyltransferase.